Here is a 124-residue protein sequence, read N- to C-terminus: Large ribosomal subunit protein uL18 (124 aa).

Belongs to the universal ribosomal protein uL18 family. As to quaternary structure, part of the 50S ribosomal subunit; part of the 5S rRNA/L5/L18/L25 subcomplex. Contacts the 5S and 23S rRNAs.

This is one of the proteins that bind and probably mediate the attachment of the 5S RNA into the large ribosomal subunit, where it forms part of the central protuberance. This Aquifex pyrophilus protein is Large ribosomal subunit protein uL18.